The chain runs to 537 residues: Probable E3 ubiquitin-protein ligase ARI3 (537 aa).

Positions 1 to 30 (MDDDYMMLDDDYGEEEDENYSEDDNYSEAE) are disordered. The interval 117 to 331 (KTMKCDVCME…IAGHSCGRYK (215 aa)) is TRIAD supradomain. Zn(2+) is bound by residues cysteine 121, cysteine 124, cysteine 139, histidine 141, cysteine 144, cysteine 147, cysteine 166, cysteine 171, cysteine 210, cysteine 216, cysteine 234, cysteine 236, cysteine 241, cysteine 244, histidine 249, cysteine 254, cysteine 281, and cysteine 284. Residues 121–171 (CDVCMEDDLPSNVMTRMECGHRFCNDCWIGHFTVKINEGESKRILCMAHEC) form an RING-type 1 zinc finger. The IBR-type zinc-finger motif lies at 190–254 (DRYDRFLIES…LSESHSPCSC (65 aa)). Residues 281-309 (CPKCSKPIQKRDGCNLMTCKCGQHFCWLC) form an RING-type 2; atypical zinc finger. The active site involves cysteine 294. Zn(2+)-binding residues include cysteine 299, cysteine 301, cysteine 306, cysteine 309, histidine 317, and cysteine 327.

It belongs to the RBR family. Ariadne subfamily. Zn(2+) is required as a cofactor. As to expression, ubiquitous.

The catalysed reaction is [E2 ubiquitin-conjugating enzyme]-S-ubiquitinyl-L-cysteine + [acceptor protein]-L-lysine = [E2 ubiquitin-conjugating enzyme]-L-cysteine + [acceptor protein]-N(6)-ubiquitinyl-L-lysine.. It functions in the pathway protein modification; protein ubiquitination. In terms of biological role, might act as an E3 ubiquitin-protein ligase, or as part of E3 complex, which accepts ubiquitin from specific E2 ubiquitin-conjugating enzymes and then transfers it to substrates. This is Probable E3 ubiquitin-protein ligase ARI3 (ARI3) from Arabidopsis thaliana (Mouse-ear cress).